We begin with the raw amino-acid sequence, 1477 residues long: Ring canal kelch protein (1477 aa).

Disordered regions lie at residues 19–62 (LSNG…PGLG), 76–96 (LLQQ…EGSG), and 108–137 (SQNS…YSNE). The segment covering 20–46 (SNGNSNNNNQQQQQQQQGQNPQQPAQN) has biased composition (low complexity). Residues Ser-108 and Ser-111 each carry the phosphoserine modification. One can recognise a BTB domain in the interval 157-223 (CDVILVADDV…VYTATVEVNE (67 aa)). Kelch repeat units lie at residues 404-449 (ILLV…VLGD), 450-496 (KVYA…VLNG), 498-543 (IYAV…VVHG), 545-592 (LYAV…VLNN), 594-639 (LYAV…AHDG), and 641-687 (LYVV…MIDK). A non-standard amino acid (selenocysteine) is located at residue Sec-690. Disordered stretches follow at residues 744 to 841 (PAAP…PQRI), 1119 to 1200 (HSAA…GNGT), 1291 to 1326 (RDAN…QYED), 1359 to 1416 (PLLQ…FKPK), and 1446 to 1477 (PVSL…EHND). 2 stretches are compositionally biased toward low complexity: residues 763–813 (APIG…ANNN) and 820–839 (AAPA…QQPQ). A compositionally biased stretch (polar residues) spans 1125–1137 (IPSSSNINANRTT). Over residues 1166 to 1192 (KTTSTGSGKSVTLAKKTSTAAARSSSS) the composition is skewed to low complexity. Low complexity-rich tracts occupy residues 1374-1391 (QQRR…QSQQ) and 1456-1477 (TTSS…EHND).

As to expression, both proteins are expressed in ovaries, male testis, ovariectomized females, cuticle, salivary gland and imaginal disks. Kelch short protein is the predominant form and is also expressed in fat bodies. On entry into metamorphosis levels of full-length protein increase in testis and imaginal disks.

It is found in the cytoplasm. The protein resides in the cytoskeleton. Component of ring canals that regulates the flow of cytoplasm between cells. May be involved in the regulation of cytoplasm flow from nurse cells to the oocyte during oogenesis. Binds actin. This is Ring canal kelch protein (kel) from Drosophila melanogaster (Fruit fly).